The following is a 175-amino-acid chain: Ribosome maturation factor RimM (175 aa).

The PRC barrel domain occupies 100–174; sequence EDEYYWNDVI…VKHKIITVIW (75 aa).

This sequence belongs to the RimM family. As to quaternary structure, binds ribosomal protein uS19.

Its subcellular location is the cytoplasm. An accessory protein needed during the final step in the assembly of 30S ribosomal subunit, possibly for assembly of the head region. Essential for efficient processing of 16S rRNA. May be needed both before and after RbfA during the maturation of 16S rRNA. It has affinity for free ribosomal 30S subunits but not for 70S ribosomes. This chain is Ribosome maturation factor RimM, found in Buchnera aphidicola subsp. Schizaphis graminum (strain Sg).